Consider the following 284-residue polypeptide: MEMO1 family protein LS215_2219 (284 aa).

It belongs to the MEMO1 family.

The sequence is that of MEMO1 family protein LS215_2219 from Saccharolobus islandicus (strain L.S.2.15 / Lassen #1) (Sulfolobus islandicus).